Consider the following 394-residue polypeptide: Probable malate--CoA ligase subunit beta (394 aa).

The ATP-grasp domain occupies 9-244 (KELLARHGVH…KSQEDPRETF (236 aa)). Positions 46, 99, 102, and 107 each coordinate ATP. Residues asparagine 199 and aspartate 213 each coordinate Mg(2+).

It belongs to the succinate/malate CoA ligase beta subunit family. In terms of assembly, heterotetramer of two alpha and two beta subunits. It depends on Mg(2+) as a cofactor.

The enzyme catalyses (S)-malate + ATP + CoA = (S)-malyl-CoA + ADP + phosphate. The protein operates within one-carbon metabolism; formaldehyde assimilation via serine pathway. This Mesorhizobium japonicum (strain LMG 29417 / CECT 9101 / MAFF 303099) (Mesorhizobium loti (strain MAFF 303099)) protein is Probable malate--CoA ligase subunit beta (mtkA).